We begin with the raw amino-acid sequence, 109 residues long: MQQFEWIHGAWLGLAIMLEIAANVLLKFSDGFRRKCYGILSLAAVLAAFSALSQAVKGIDLSVAYALWGGFGIAATLAAGWVLFGQRLNPKGWVGVILLLAGMVMIKFA.

4 helical membrane-spanning segments follow: residues 6 to 26 (WIHGAWLGLAIMLEIAANVLL), 36 to 56 (CYGILSLAAVLAAFSALSQAV), 64 to 84 (AYALWGGFGIAATLAAGWVLF), and 88 to 108 (LNPKGWVGVILLLAGMVMIKF).

It belongs to the drug/metabolite transporter (DMT) superfamily. Small multidrug resistance (SMR) (TC 2.A.7.1) family. MdtI subfamily. As to quaternary structure, forms a complex with MdtJ.

It is found in the cell inner membrane. Catalyzes the excretion of spermidine. The chain is Spermidine export protein MdtI from Salmonella choleraesuis (strain SC-B67).